Here is a 588-residue protein sequence, read N- to C-terminus: Aspartate--tRNA ligase (588 aa).

Glu174 is an L-aspartate binding site. The interval 198–201 is aspartate; sequence QLFK. An L-aspartate-binding site is contributed by Arg220. ATP contacts are provided by residues 220–222 and Gln229; that span reads RDE. His448 provides a ligand contact to L-aspartate. Residue Glu482 coordinates ATP. Arg489 contacts L-aspartate. 534–537 contributes to the ATP binding site; that stretch reads GIDR.

It belongs to the class-II aminoacyl-tRNA synthetase family. Type 1 subfamily. In terms of assembly, homodimer.

It is found in the cytoplasm. It carries out the reaction tRNA(Asp) + L-aspartate + ATP = L-aspartyl-tRNA(Asp) + AMP + diphosphate. Functionally, catalyzes the attachment of L-aspartate to tRNA(Asp) in a two-step reaction: L-aspartate is first activated by ATP to form Asp-AMP and then transferred to the acceptor end of tRNA(Asp). The chain is Aspartate--tRNA ligase from Xanthomonas campestris pv. campestris (strain 8004).